The primary structure comprises 324 residues: Ig gamma-1 chain C region secreted form (324 aa).

Residues A1–I97 are CH1. Cysteines 27 and 82 form a disulfide. Positions V98–T110 are hinge. The CH2 stretch occupies residues V111 to K217. Intrachain disulfides connect C138–C198 and C244–C302. The N-linked (GlcNAc...) asparagine glycan is linked to N174. The segment at G218–K324 is CH3.

The protein resides in the secreted. The polypeptide is Ig gamma-1 chain C region secreted form (Ighg1) (Mus musculus (Mouse)).